The following is a 619-amino-acid chain: Dynein axonemal intermediate chain 2 (619 aa).

5 WD repeats span residues 214–254, 261–302, 362–401, 405–445, and 450–489; these read KPSS…LVAE, SHRD…EPTE, GHHGPIYALQRNPFYPKNFLTVGDWAARIWSEESRESSIM, YHMA…CDPA, and VCDDPLFCLRVQDTGCLIACGSELGTTTLLEVSSSLSTLQ. The tract at residues 566–619 is disordered; the sequence is EALKKKPKPKKASIEVEGEDELEDIAGEEEESGIIMGEDTGEDDMDEKNEGGAP. Positions 581–597 are enriched in acidic residues; sequence VEGEDELEDIAGEEEES.

Belongs to the dynein intermediate chain family. In terms of assembly, consists of at least two heavy chains and a number of intermediate and light chains. Interacts with DNAAF2. Interacts with DNAAF6/PIH1D3. Interacts with HEATR2; probably involved in outer arm dynein assembly. Interacts with CFAP53.

It localises to the cytoplasm. Its subcellular location is the cytoskeleton. The protein localises to the cilium axoneme. It is found in the dynein axonemal particle. In terms of biological role, part of the dynein complex of respiratory cilia. This chain is Dynein axonemal intermediate chain 2 (Dnai2), found in Rattus norvegicus (Rat).